Here is a 160-residue protein sequence, read N- to C-terminus: Protein-export protein SecB (160 aa).

Belongs to the SecB family. In terms of assembly, homotetramer, a dimer of dimers. One homotetramer interacts with 1 SecA dimer.

It is found in the cytoplasm. In terms of biological role, one of the proteins required for the normal export of preproteins out of the cell cytoplasm. It is a molecular chaperone that binds to a subset of precursor proteins, maintaining them in a translocation-competent state. It also specifically binds to its receptor SecA. The polypeptide is Protein-export protein SecB (Agrobacterium fabrum (strain C58 / ATCC 33970) (Agrobacterium tumefaciens (strain C58))).